Consider the following 342-residue polypeptide: MGEAEMNEDVYVLGIETSCDETAAAVVKNGREVLSNVVASQMESHRRFGGVVPEIASRHHVEQITLVIEEAMQQAGVSFASLDAVAVTAGPGLVGALLVGVNAAKALAFAHGLPLIGVHHIAGHIYANQLVAEMKFPLLALVVSGGHTELVFMKEHGNFAVIGETRDDAAGEAYDKVARALGLPYPGGPHIDRLAHEGEPVIDLPRAWLEEGSYDFSFSGLKSAVLNALHNAKQRGEEIDPRQMAASFQASVVDVLVTKTVQAAKEYRVRQVLLAGGVAANRGLRAALQDKMKELPDVELVIPPLSLCTDNAAMIAVAGTVLYQQGKRADLALNANPSLPLV.

Residues H120 and H124 each coordinate Fe cation. Substrate is bound by residues 142–146 (VVSGG), D175, G188, D192, and N281. Residue D310 coordinates Fe cation.

It belongs to the KAE1 / TsaD family. Fe(2+) is required as a cofactor.

It localises to the cytoplasm. The enzyme catalyses L-threonylcarbamoyladenylate + adenosine(37) in tRNA = N(6)-L-threonylcarbamoyladenosine(37) in tRNA + AMP + H(+). Functionally, required for the formation of a threonylcarbamoyl group on adenosine at position 37 (t(6)A37) in tRNAs that read codons beginning with adenine. Is involved in the transfer of the threonylcarbamoyl moiety of threonylcarbamoyl-AMP (TC-AMP) to the N6 group of A37, together with TsaE and TsaB. TsaD likely plays a direct catalytic role in this reaction. The polypeptide is tRNA N6-adenosine threonylcarbamoyltransferase (Geobacillus kaustophilus (strain HTA426)).